The chain runs to 846 residues: Neurofilament medium polypeptide (846 aa).

Polar residues predominate over residues 1–10 (MSYTLDSLGN). A disordered region spans residues 1 to 52 (MSYTLDSLGNPSAYRRVPTETRSSFSRVSGSPSSGFRSQSWSRGSPSTVSSS). S2 is modified (N-acetylserine). The segment at 2-104 (SYTLDSLGNP…LSRSNEKEQL (103 aa)) is head. Residues 22–45 (RSSFSRVSGSPSSGFRSQSWSRGS) show a composition bias toward low complexity. The residue at position 31 (S31) is a Phosphoserine. An Omega-N-methylarginine modification is found at R43. Residue T48 is glycosylated (O-linked (GlcNAc) threonine). S98 bears the Phosphoserine mark. The region spanning 100-411 (EKEQLQGLND…KLLEGEETRF (312 aa)) is the IF rod domain. The segment at 104-135 (LQGLNDRFAGYIEKVHYLEQQNKEIEAEIHAL) is coil 1A. The tract at residues 136-148 (RQKQASHAQLGDA) is linker 1. Residues 149-247 (YDQEIRELRA…EEEVADLLAQ (99 aa)) form a coil 1B region. Position 225 is a phosphoserine (S225). The segment at 248-264 (IQASHITVERKDYLKTD) is linker 12. Residues 265–286 (ISTALKEIRSQLECHSDQNMHQ) form a coil 2A region. The segment at 287–290 (AEEW) is linker 2. Residues 291 to 411 (FKCRYAKLTE…KLLEGEETRF (121 aa)) are coil 2B. Y319 carries the phosphotyrosine modification. Phosphoserine is present on residues S345, S417, and S429. The tail stretch occupies residues 412–845 (STFSGSITGP…HAIVKEVTQG (434 aa)). T431 carries O-linked (GlcNAc) threonine glycosylation. Residues S467 and S483 each carry the phosphoserine modification. The disordered stretch occupies residues 483–783 (SAKEEKEEAE…GEDRSDDKVV (301 aa)). Positions 489–499 (EEAEEKEEEPE) are enriched in acidic residues. A compositionally biased stretch (basic and acidic residues) spans 500–510 (VEKSPVKSPEA). 2 positions are modified to phosphoserine: S503 and S507. Acidic residues predominate over residues 511-533 (KEEEEGEKEEEEEGQEEEEEEDE). Residues 534 to 553 (GVKSDQAEEGGSEKEGSSEK) show a composition bias toward basic and acidic residues. 4 positions are modified to phosphoserine: S537, S545, S550, and S551. Residues 554–575 (DEGEQEEEGETEAEGEGEEAEA) show a composition bias toward acidic residues. T564 is modified (phosphothreonine). Residues 576–603 (KEEKKTEGKVEEMAIKEEIKVEKPEKAK) show a composition bias toward basic and acidic residues. Phosphoserine occurs at positions 604, 609, 643, 667, 687, 713, 721, 751, and 767. 2 stretches are compositionally biased toward basic and acidic residues: residues 610–675 (PVEE…KAVE) and 687–709 (SLEKDTKEEKPQQQEKVKEKAEE). Composition is skewed to basic and acidic residues over residues 718–730 (GDKSPQESKKEDI) and 746–758 (TQEKGSGQEEEKG). A compositionally biased stretch (basic and acidic residues) spans 769-783 (AEEKKGEDRSDDKVV).

This sequence belongs to the intermediate filament family. In terms of assembly, forms heterodimers with NEFL; which can further hetero-oligomerize (in vitro). Forms heterodimers with INA (in vitro). There are a number of repeats of the tripeptide K-S-P, NFM is phosphorylated on a number of the serines in this motif. It is thought that phosphorylation of NFM results in the formation of interfilament cross bridges that are important in the maintenance of axonal caliber. In terms of processing, phosphorylation seems to play a major role in the functioning of the larger neurofilament polypeptides (NF-M and NF-H), the levels of phosphorylation being altered developmentally and coincidentally with a change in the neurofilament function. Post-translationally, phosphorylated in the head and rod regions by the PKC kinase PKN1, leading to the inhibition of polymerization. In terms of tissue distribution, expressed in the dorsal root ganglion neurons (at protein level).

It localises to the cytoplasm. The protein localises to the cytoskeleton. Its subcellular location is the cell projection. The protein resides in the axon. Its function is as follows. Neurofilaments usually contain three intermediate filament proteins: NEFL, NEFM, and NEFH which are involved in the maintenance of neuronal caliber. May additionally cooperate with the neuronal intermediate filament proteins PRPH and INA to form neuronal filamentous networks. The polypeptide is Neurofilament medium polypeptide (Nefm) (Rattus norvegicus (Rat)).